A 272-amino-acid polypeptide reads, in one-letter code: NADH-cytochrome b5 reductase 3 (272 aa).

The FAD-binding FR-type domain occupies 11–123; sequence DIKYPLRLID…RGPNGLLVYQ (113 aa). Position 13 is an N6-acetyllysine (lysine 13). At tyrosine 14 the chain carries Phosphotyrosine. Lysine 21 is modified (N6-acetyllysine). Residues arginine 63, proline 64, tyrosine 65, valine 80, lysine 82, and tyrosine 84 each contribute to the FAD site. Lysine 91 is modified (N6-acetyllysine). The FAD site is built by lysine 97, methionine 98, serine 99, and threonine 156.

It belongs to the flavoprotein pyridine nucleotide cytochrome reductase family. As to quaternary structure, component of a complex composed of cytochrome b5, NADH-cytochrome b5 reductase (CYB5R3) and MTARC2. Interacts with MTLN; the interaction is required to maintain cellular lipid composition and leads to stimulation of mitochondrial respiratory complex I activity. Requires FAD as cofactor.

It localises to the endoplasmic reticulum membrane. It is found in the mitochondrion outer membrane. It catalyses the reaction 2 Fe(III)-[cytochrome b5] + NADH = 2 Fe(II)-[cytochrome b5] + NAD(+) + H(+). In terms of biological role, catalyzes the reduction of two molecules of cytochrome b5 using NADH as the electron donor. The sequence is that of NADH-cytochrome b5 reductase 3 (CYB5R3) from Sus scrofa (Pig).